The chain runs to 122 residues: Large ribosomal subunit protein uL14 (122 aa).

It belongs to the universal ribosomal protein uL14 family. In terms of assembly, part of the 50S ribosomal subunit. Forms a cluster with proteins L3 and L19. In the 70S ribosome, L14 and L19 interact and together make contacts with the 16S rRNA in bridges B5 and B8.

In terms of biological role, binds to 23S rRNA. Forms part of two intersubunit bridges in the 70S ribosome. This is Large ribosomal subunit protein uL14 from Streptococcus pyogenes serotype M2 (strain MGAS10270).